We begin with the raw amino-acid sequence, 389 residues long: S-adenosylmethionine synthase (389 aa).

His-15 is an ATP binding site. Residue Asp-17 participates in Mg(2+) binding. K(+) is bound at residue Glu-43. Residues Glu-56 and Gln-99 each contribute to the L-methionine site. The tract at residues 99–109 is flexible loop; the sequence is QSPDIAQGVNE. ATP contacts are provided by residues 166 to 168, 234 to 235, Asp-243, 249 to 250, Ala-266, and Lys-270; these read DAK, RF, and RK. Position 243 (Asp-243) interacts with L-methionine. Lys-274 serves as a coordination point for L-methionine.

This sequence belongs to the AdoMet synthase family. Homotetramer; dimer of dimers. Requires Mg(2+) as cofactor. It depends on K(+) as a cofactor.

The protein resides in the cytoplasm. The catalysed reaction is L-methionine + ATP + H2O = S-adenosyl-L-methionine + phosphate + diphosphate. It functions in the pathway amino-acid biosynthesis; S-adenosyl-L-methionine biosynthesis; S-adenosyl-L-methionine from L-methionine: step 1/1. Catalyzes the formation of S-adenosylmethionine (AdoMet) from methionine and ATP. The overall synthetic reaction is composed of two sequential steps, AdoMet formation and the subsequent tripolyphosphate hydrolysis which occurs prior to release of AdoMet from the enzyme. This is S-adenosylmethionine synthase from Neisseria meningitidis serogroup A / serotype 4A (strain DSM 15465 / Z2491).